The primary structure comprises 350 residues: Probable deoxyhypusine synthase (350 aa).

NAD(+) contacts are provided by residues 96–100 (SNLIS), 122–124 (TAG), E128, and D229. 127-128 (EE) serves as a coordination point for spermidine. A spermidine-binding site is contributed by D234. NAD(+) is bound at residue G276. H281 is a spermidine binding site. 301–302 (SA) serves as a coordination point for NAD(+). Spermidine-binding positions include 307-309 (GSD) and 316-322 (EAVSWGK). The active-site Nucleophile is K322. NAD(+) is bound at residue 335-336 (EV).

Belongs to the deoxyhypusine synthase family. NAD(+) is required as a cofactor.

It carries out the reaction [eIF5A protein]-L-lysine + spermidine = [eIF5A protein]-deoxyhypusine + propane-1,3-diamine. Its pathway is protein modification; eIF5A hypusination. In terms of biological role, catalyzes the NAD-dependent oxidative cleavage of spermidine and the subsequent transfer of the butylamine moiety of spermidine to the epsilon-amino group of a specific lysine residue of the eIF-5A precursor protein to form the intermediate deoxyhypusine residue. The polypeptide is Probable deoxyhypusine synthase (Schizosaccharomyces pombe (strain 972 / ATCC 24843) (Fission yeast)).